A 182-amino-acid polypeptide reads, in one-letter code: tRNA-splicing endonuclease (182 aa).

Active-site residues include Tyr-119, His-127, and Lys-158.

Belongs to the tRNA-intron endonuclease family. Archaeal short subfamily. In terms of assembly, homotetramer; although the tetramer contains four active sites, only two participate in the cleavage. Therefore, it should be considered as a dimer of dimers.

It catalyses the reaction pretRNA = a 3'-half-tRNA molecule with a 5'-OH end + a 5'-half-tRNA molecule with a 2',3'-cyclic phosphate end + an intron with a 2',3'-cyclic phosphate and a 5'-hydroxyl terminus.. Its function is as follows. Endonuclease that removes tRNA introns. Cleaves pre-tRNA at the 5'- and 3'-splice sites to release the intron. The products are an intron and two tRNA half-molecules bearing 2',3' cyclic phosphate and 5'-OH termini. Recognizes a pseudosymmetric substrate in which 2 bulged loops of 3 bases are separated by a stem of 4 bp. This chain is tRNA-splicing endonuclease, found in Saccharolobus islandicus (strain L.S.2.15 / Lassen #1) (Sulfolobus islandicus).